Here is a 1224-residue protein sequence, read N- to C-terminus: Period circadian protein (1224 aa).

The segment covering M1–V15 has biased composition (polar residues). Positions M1 to P175 are disordered. A compositionally biased stretch (low complexity) spans S16–S47. The Nuclear localization signal signature appears at K66 to K79. The span at K66–K79 shows a compositional bias: basic residues. Over residues E121–E133 the composition is skewed to basic and acidic residues. PAS domains lie at D238–I373 and F391–Q497. 5 disordered regions span residues V632–A764, K788–D807, G874–S927, T978–A1008, and T1094–G1224. Residues N675–A693 show a composition bias toward polar residues. Repeat copies occupy residues G694–T695, G697–T698, G699–T700, G701–T702, G703–T704, G705–T706, G707–T708, G709–T710, G711–T712, G713–T714, G715–T716, G717–T718, G719–T720, G721–T722, G723–T724, G725–T726, G727–T728, G729–T730, G731–T732, G733–T734, G735–T736, G737–T738, G739–T740, G741–T742, G743–N744, and G745–T746. Positions G694–T752 are enriched in gly residues. A 30 X 2 AA approximate tandem repeats of G-[TN] region spans residues G694 to T754. The stretch at N747–S748 is one 27; approximate repeat. 3 repeat units span residues G749–T750, G751–T752, and G753–T754. Positions G749 to A868 are regulates the rhythm of species-specific courtship song. Positions R794–A805 are enriched in basic and acidic residues. Over residues G895–G907 the composition is skewed to gly residues. A compositionally biased stretch (low complexity) spans A908 to S927. Polar residues-rich tracts occupy residues T1094–A1117 and P1143–K1154. Low complexity predominate over residues D1158–S1177. Residues K1209 to G1224 show a composition bias toward basic and acidic residues.

Forms a heterodimer with timeless (TIM); the complex then translocates into the nucleus. A proportion of the protein exists as homodimer. Post-translationally, phosphorylated with a circadian rhythmicity, probably by the double-time protein (dbt). Phosphorylation could be implicated in the stability of per monomer and in the formation of heterodimer per-tim. In terms of tissue distribution, expressed in neural tissues and in several nonneural tissues of the abdomen. Malpighian tubules contain a circadian pacemaker that functions independently of the brain. Expression oscillates in all tissues studied except for the ovary. PER-A isoforms are mainly expressed in adult's head.

The protein resides in the nucleus. It is found in the cytoplasm. It localises to the perinuclear region. The protein localises to the cytosol. Functionally, essential for biological clock functions. Determines the period length of circadian and ultradian rhythms; an increase in PER dosage leads to shortened circadian rhythms and a decrease leads to lengthened circadian rhythms. Essential for the circadian rhythmicity of locomotor activity, eclosion behavior, and for the rhythmic component of the male courtship song that originates in the thoracic nervous system. The biological cycle depends on the rhythmic formation and nuclear localization of the TIM-PER complex. Light induces the degradation of TIM, which promotes elimination of PER. Nuclear activity of the heterodimer coordinatively regulates PER and TIM transcription through a negative feedback loop. Behaves as a negative element in circadian transcriptional loop. Does not appear to bind DNA, suggesting indirect transcriptional inhibition. Required for binding of cwo to the E box regions in the promoters of target genes of the transcriptional activator Clock, probably by binding to Clock-cycle heterodimers, reducing their affinity for E box binding and allowing cwo to bind instead. The protein is Period circadian protein (per) of Drosophila melanogaster (Fruit fly).